A 130-amino-acid chain; its full sequence is Small ribosomal subunit protein uS8 (130 aa).

The protein belongs to the universal ribosomal protein uS8 family. As to quaternary structure, part of the 30S ribosomal subunit. Contacts proteins S5 and S12.

Functionally, one of the primary rRNA binding proteins, it binds directly to 16S rRNA central domain where it helps coordinate assembly of the platform of the 30S subunit. This chain is Small ribosomal subunit protein uS8, found in Shewanella piezotolerans (strain WP3 / JCM 13877).